We begin with the raw amino-acid sequence, 388 residues long: S-adenosylmethionine synthase (388 aa).

ATP is bound at residue His17. Asp19 is a binding site for Mg(2+). Position 45 (Glu45) interacts with K(+). The L-methionine site is built by Glu58 and Gln102. The flexible loop stretch occupies residues 102–112 (QSADIAQGVDA). Residues 167 to 169 (DSK), 232 to 233 (RF), Asp241, 247 to 248 (RK), Ala264, and Lys268 each bind ATP. Asp241 is an L-methionine binding site. Lys272 lines the L-methionine pocket.

It belongs to the AdoMet synthase family. As to quaternary structure, homotetramer; dimer of dimers. The cofactor is Mg(2+). K(+) is required as a cofactor.

Its subcellular location is the cytoplasm. It catalyses the reaction L-methionine + ATP + H2O = S-adenosyl-L-methionine + phosphate + diphosphate. Its pathway is amino-acid biosynthesis; S-adenosyl-L-methionine biosynthesis; S-adenosyl-L-methionine from L-methionine: step 1/1. Functionally, catalyzes the formation of S-adenosylmethionine (AdoMet) from methionine and ATP. The overall synthetic reaction is composed of two sequential steps, AdoMet formation and the subsequent tripolyphosphate hydrolysis which occurs prior to release of AdoMet from the enzyme. The protein is S-adenosylmethionine synthase of Paramagnetospirillum magneticum (strain ATCC 700264 / AMB-1) (Magnetospirillum magneticum).